A 257-amino-acid chain; its full sequence is MLILVSPAKTLDFEQPPLTQVYSQPDFLYHSQELIQVCRQLAPSDIATLMKVSDKIAGLNAARFEGWQPQFTLENAKQAIFAFRGDVYTGFDADTLSSQELERAQSQLRILSGLYGLLRPLDLILPYRLEMGTALNNARGKNLYDFWGDILTLAVNKTLTEQGDRIVVNLASNEYFKAIKVRQLDGQLITPVFKDYKNGQYKVISFFAKRARGMMARYIIKQQINSIDELIKFDAAGYYYSEEHSTQSEPTFLREAQ.

Belongs to the UPF0246 family.

The protein is UPF0246 protein Sputcn32_1053 of Shewanella putrefaciens (strain CN-32 / ATCC BAA-453).